We begin with the raw amino-acid sequence, 180 residues long: NAD(P)H-quinone oxidoreductase subunit I, chloroplastic (180 aa).

4Fe-4S ferredoxin-type domains are found at residues 55–84 (GRIHFEFDKCIACEVCVRVCPIDLPLVDWK) and 95–124 (LNYSIDFGVCIFCGNCVEYCPTNCLSMTEE). [4Fe-4S] cluster-binding residues include cysteine 64, cysteine 67, cysteine 70, cysteine 74, cysteine 104, cysteine 107, cysteine 110, and cysteine 114.

Belongs to the complex I 23 kDa subunit family. As to quaternary structure, NDH is composed of at least 16 different subunits, 5 of which are encoded in the nucleus. [4Fe-4S] cluster serves as cofactor.

It is found in the plastid. Its subcellular location is the chloroplast thylakoid membrane. The enzyme catalyses a plastoquinone + NADH + (n+1) H(+)(in) = a plastoquinol + NAD(+) + n H(+)(out). The catalysed reaction is a plastoquinone + NADPH + (n+1) H(+)(in) = a plastoquinol + NADP(+) + n H(+)(out). Functionally, NDH shuttles electrons from NAD(P)H:plastoquinone, via FMN and iron-sulfur (Fe-S) centers, to quinones in the photosynthetic chain and possibly in a chloroplast respiratory chain. The immediate electron acceptor for the enzyme in this species is believed to be plastoquinone. Couples the redox reaction to proton translocation, and thus conserves the redox energy in a proton gradient. The sequence is that of NAD(P)H-quinone oxidoreductase subunit I, chloroplastic from Sorghum bicolor (Sorghum).